We begin with the raw amino-acid sequence, 339 residues long: Lipoate-protein ligase A (339 aa).

The 188-residue stretch at 29-216 (DPSQQVLFLW…SFENFYAGKA (188 aa)) folds into the BPL/LPL catalytic domain. ATP-binding positions include R71, 76-79 (GAVF), and K134. K134 is a binding site for (R)-lipoate.

The protein belongs to the LplA family. In terms of assembly, monomer.

It localises to the cytoplasm. It catalyses the reaction L-lysyl-[lipoyl-carrier protein] + (R)-lipoate + ATP = N(6)-[(R)-lipoyl]-L-lysyl-[lipoyl-carrier protein] + AMP + diphosphate + H(+). It functions in the pathway protein modification; protein lipoylation via exogenous pathway; protein N(6)-(lipoyl)lysine from lipoate: step 1/2. The protein operates within protein modification; protein lipoylation via exogenous pathway; protein N(6)-(lipoyl)lysine from lipoate: step 2/2. In terms of biological role, catalyzes both the ATP-dependent activation of exogenously supplied lipoate to lipoyl-AMP and the transfer of the activated lipoyl onto the lipoyl domains of lipoate-dependent enzymes. The protein is Lipoate-protein ligase A of Bdellovibrio bacteriovorus (strain ATCC 15356 / DSM 50701 / NCIMB 9529 / HD100).